Here is a 382-residue protein sequence, read N- to C-terminus: Small ribosomal subunit protein bS1 homolog (382 aa).

S1 motif domains are found at residues 16–84, 102–167, 188–256, and 273–342; these read GDVV…LSKR, KEVF…LSHR, GSVL…LSIK, and GDVL…LSMR. S243 carries the post-translational modification Phosphoserine.

It belongs to the bacterial ribosomal protein bS1 family.

Plays a role in sporulation. Cannot be expressed in wild-type E.coli, does not complement an E.coli rpsA deletion. The protein is Small ribosomal subunit protein bS1 homolog of Bacillus subtilis (strain 168).